A 258-amino-acid chain; its full sequence is Indole-3-glycerol phosphate synthase (258 aa).

Belongs to the TrpC family.

It carries out the reaction 1-(2-carboxyphenylamino)-1-deoxy-D-ribulose 5-phosphate + H(+) = (1S,2R)-1-C-(indol-3-yl)glycerol 3-phosphate + CO2 + H2O. It functions in the pathway amino-acid biosynthesis; L-tryptophan biosynthesis; L-tryptophan from chorismate: step 4/5. The polypeptide is Indole-3-glycerol phosphate synthase (Chlorobium limicola (strain DSM 245 / NBRC 103803 / 6330)).